A 439-amino-acid polypeptide reads, in one-letter code: MAAMPKPSDSKTGGKATVLLGSQWGDEGKGKLADVLSGQMDVCARCAGGNNAGHTIVADVNGVKTKFDFHLLPSGLVNPRCAGFIGSGVVVHVPSFFAELDTIQKKGLNCDGRLFISDRAHLVFDFHQVVDGLKEVELGGSSIGTTKKGIGPAYSSKASRSGLRVHHLYDPELFATKFRKLVEGRFKRYGHFEYDTEGEIARYRAFAERLRPHIVDGVTFIHTALAQNRKVLVEGANALFLDIDFGTYPFVTSSSTSIGGVLTGLGIPPTAIGDVIGVMKAYTTRVGMGPFPTELHEEIGHHLQEVGAEYGVTTGRRRRCGWLDLVMMRYSCLINGYTSLNLTKLDVLDQLKEIKICVGYVVDGKELPSFPADLEVLAKVEVQYKTLPGWQQDISKTTTWEELPENCRNYVDFIEQFLGVKIEWIGVGPARESMIHRAG.

GTP is bound by residues Gly-25–Lys-31 and Gly-53–Thr-55. The active-site Proton acceptor is the Asp-26. The Mg(2+) site is built by Asp-26 and Gly-53. IMP is bound by residues Asp-26–Lys-29, Asn-51–His-54, Thr-146, Arg-160, Asn-237, Thr-252, and Arg-316. His-54 (proton donor) is an active-site residue. Val-312–Arg-318 provides a ligand contact to substrate. GTP-binding positions include Arg-318, Lys-344–Asp-346, and Gly-426–Gly-428.

This sequence belongs to the adenylosuccinate synthetase family. As to quaternary structure, homodimer. Mg(2+) is required as a cofactor.

It localises to the cytoplasm. The catalysed reaction is IMP + L-aspartate + GTP = N(6)-(1,2-dicarboxyethyl)-AMP + GDP + phosphate + 2 H(+). It participates in purine metabolism; AMP biosynthesis via de novo pathway; AMP from IMP: step 1/2. Plays an important role in the de novo pathway and in the salvage pathway of purine nucleotide biosynthesis. Catalyzes the first committed step in the biosynthesis of AMP from IMP. The chain is Adenylosuccinate synthetase from Mycosarcoma maydis (Corn smut fungus).